Consider the following 332-residue polypeptide: RNA polymerase principal sigma factor HrdD (332 aa).

The disordered stretch occupies residues 1 to 21; sequence MATRAVARRQPAASGETGAAG. The short motif at 124 to 137 is the Polymerase core binding element; sequence DLIQEGNAGLVRAV. The segment at residues 294–313 is a DNA-binding region (H-T-H motif); it reads LTEVGKQHGLTRERIRQIEK.

This sequence belongs to the sigma-70 factor family.

Functionally, sigma factors are initiation factors that promote the attachment of RNA polymerase to specific initiation sites and are then released. This chain is RNA polymerase principal sigma factor HrdD (hrdD), found in Streptomyces griseus.